The following is a 279-amino-acid chain: Methyltransferase ausD (279 aa).

S-adenosyl-L-methionine contacts are provided by residues 124–125, 152–153, and arginine 244; these read DL and DI.

Belongs to the class I-like SAM-binding methyltransferase superfamily. As to quaternary structure, homodimer.

It participates in secondary metabolite biosynthesis; terpenoid biosynthesis. Methyltransferase; part of the gene cluster that mediates the biosynthesis of calidodehydroaustin, a fungal meroterpenoid. The first step of the pathway is the synthesis of 3,5-dimethylorsellinic acid by the polyketide synthase ausA. 3,5-dimethylorsellinic acid is then prenylated by the polyprenyl transferase ausN. Further epoxidation by the FAD-dependent monooxygenase ausM and cyclization by the probable terpene cyclase ausL lead to the formation of protoaustinoid A. Protoaustinoid A is then oxidized to spiro-lactone preaustinoid A3 by the combined action of the FAD-binding monooxygenases ausB and ausC, and the dioxygenase ausE. Acid-catalyzed keto-rearrangement and ring contraction of the tetraketide portion of preaustinoid A3 by ausJ lead to the formation of preaustinoid A4. The aldo-keto reductase ausK, with the help of ausH, is involved in the next step by transforming preaustinoid A4 into isoaustinone which is in turn hydroxylated by the P450 monooxygenase ausI to form austinolide. The cytochrome P450 monooxygenase ausG modifies austinolide to austinol. Austinol is further acetylated to austin by the O-acetyltransferase ausP, which spontaneously changes to dehydroaustin. The cytochrome P450 monooxygenase ausR then converts dehydroaustin is into 7-dehydrodehydroaustin. The hydroxylation catalyzed by ausR permits the O-acetyltransferase ausQ to add an additional acetyl group to the molecule, leading to the formation of acetoxydehydroaustin. The short chain dehydrogenase ausT catalyzes the reduction of the double bond present between carbon atoms 1 and 2 to convert 7-dehydrodehydroaustin into 1,2-dihydro-7-hydroxydehydroaustin. AusQ catalyzes not only an acetylation reaction but also the addition of the PKS ausV diketide product to 1,2-dihydro-7-hydroxydehydroaustin, forming precalidodehydroaustin. Finally, the iron/alpha-ketoglutarate-dependent dioxygenase converts precalidodehydroaustin into calidodehydroaustin. The sequence is that of Methyltransferase ausD from Aspergillus calidoustus.